A 1125-amino-acid polypeptide reads, in one-letter code: Speract receptor (1125 aa).

The first 21 residues, 1–21 (MAHARHLFLFMVAFTITMVIA), serve as a signal peptide directing secretion. Topologically, residues 22 to 510 (RLDFNPTIIN…GELCTNWALY (489 aa)) are extracellular. Asparagine 185 and asparagine 409 each carry an N-linked (GlcNAc...) asparagine glycan. A helical membrane pass occupies residues 511 to 531 (LGASIPTFLIIFGGLIGFFIY). Over 532–1125 (RKRAYEAALD…AANRVIPDDV (594 aa)) the chain is Cytoplasmic. The 269-residue stretch at 571-839 (MSAISVISNA…PNIMAVRTML (269 aa)) folds into the Protein kinase domain. The 131-residue stretch at 914 to 1044 (SIFFSDIVGF…DTVNTASRME (131 aa)) folds into the Guanylate cyclase domain.

This sequence belongs to the adenylyl cyclase class-4/guanylyl cyclase family.

It is found in the membrane. The catalysed reaction is GTP = 3',5'-cyclic GMP + diphosphate. Implicated as a cell-surface receptor on spermatozoa for 'speract' a chemotactic peptide, and on various other cells as a receptor for atrial natriuretic peptide. This is Speract receptor from Strongylocentrotus purpuratus (Purple sea urchin).